A 202-amino-acid chain; its full sequence is LexA repressor (202 aa).

The H-T-H motif DNA-binding region spans R28–K48. Residues S119 and K156 each act as for autocatalytic cleavage activity in the active site.

Belongs to the peptidase S24 family. In terms of assembly, homodimer.

It carries out the reaction Hydrolysis of Ala-|-Gly bond in repressor LexA.. Its function is as follows. Represses a number of genes involved in the response to DNA damage (SOS response), including recA and lexA. Binds to the 16 bp palindromic sequence 5'-CTGTATATATATACAG-3'. In the presence of single-stranded DNA, RecA interacts with LexA causing an autocatalytic cleavage which disrupts the DNA-binding part of LexA, leading to derepression of the SOS regulon and eventually DNA repair. This is LexA repressor from Yersinia enterocolitica serotype O:8 / biotype 1B (strain NCTC 13174 / 8081).